Consider the following 544-residue polypeptide: Rubrofusarin-specific efflux pump aurT (544 aa).

A compositionally biased stretch (basic and acidic residues) spans 1–12 (MTDNTDMEKLDR). The segment at 1-42 (MTDNTDMEKLDRATTPTPIPNEAPPTSEPSESKPEEAEDESK) is disordered. The span at 17–27 (TPIPNEAPPTS) shows a compositional bias: pro residues. Residues 30–42 (SESKPEEAEDESK) are compositionally biased toward basic and acidic residues. Transmembrane regions (helical) follow at residues 45 to 65 (HGLK…LVAL), 89 to 111 (WYAS…IFTF), 116 to 136 (TVYL…GVAP), 146 to 166 (AIAG…ITTV), 177 to 197 (GMMG…GGAF), 205 to 225 (WCFY…ILLF), 246 to 266 (WGNL…QWGG), and 276 to 296 (IVAL…IQIW). A glycan (N-linked (GlcNAc...) asparagine) is linked at Asn-300. Helical transmembrane passes span 318 to 338 (IFAF…PIWF), 357 to 377 (VLSL…VGWF), 380 to 400 (VFFS…TFVV), 407 to 427 (WIGY…LASL), 444 to 464 (LMFF…QAVF), and 514 to 534 (YFYV…GIEW).

It belongs to the major facilitator superfamily. TCR/Tet family.

The protein localises to the cell membrane. It functions in the pathway pigment biosynthesis. Functionally, rubrofusarin-specific efflux pump; part of the gene cluster that mediates the biosynthesis of aurofusarin, a red mycelium pigment which is acting as a mycotoxin. The first step is performed by the polyketide synthase which condenses one acetyl-CoA and 6 malonyl-CoA units to form the first intermediate, the cyclic heptaketide and yellow pigment YWA1. The C2 hydroxyl group in the pyrone ring of YWA1 is probably formed during ring closure by an aldol-type cyclization reaction. The dehydratase aurZ then acts as the first tailoring enzyme in the aurofusarin biosynthetic pathway by converting YWA1 to nor-rubrofusarin. Nor-rubrofusarin is then methylated to rubrofusarin by the O-methyltransferase aurJ. Rubrofusarin is then transported across the plasma membrane by the rubrofusarin-specific pump aurT for further enzymatic processing by the extracellular complex composed of GIP1, aurF, aurO and aurS to yield aurofusarin. The polypeptide is Rubrofusarin-specific efflux pump aurT (Gibberella zeae (strain ATCC MYA-4620 / CBS 123657 / FGSC 9075 / NRRL 31084 / PH-1) (Wheat head blight fungus)).